Here is a 285-residue protein sequence, read N- to C-terminus: Polyamine aminopropyltransferase (285 aa).

Positions 5-238 (EMWYETLHTG…GIMTFAWASD (234 aa)) constitute a PABS domain. S-methyl-5'-thioadenosine is bound at residue Q33. The spermidine site is built by H64 and D88. Residues E108 and 140 to 141 (DG) each bind S-methyl-5'-thioadenosine. The Proton acceptor role is filled by D158. 158–161 (DCTD) contributes to the spermidine binding site. P165 is an S-methyl-5'-thioadenosine binding site.

It belongs to the spermidine/spermine synthase family. As to quaternary structure, homodimer or homotetramer.

The protein resides in the cytoplasm. It catalyses the reaction S-adenosyl 3-(methylsulfanyl)propylamine + putrescine = S-methyl-5'-thioadenosine + spermidine + H(+). The protein operates within amine and polyamine biosynthesis; spermidine biosynthesis; spermidine from putrescine: step 1/1. Functionally, catalyzes the irreversible transfer of a propylamine group from the amino donor S-adenosylmethioninamine (decarboxy-AdoMet) to putrescine (1,4-diaminobutane) to yield spermidine. The sequence is that of Polyamine aminopropyltransferase from Erwinia tasmaniensis (strain DSM 17950 / CFBP 7177 / CIP 109463 / NCPPB 4357 / Et1/99).